A 1624-amino-acid chain; its full sequence is Pappalysin-1 (1624 aa).

An N-terminal signal peptide occupies residues 1–22; sequence MRLWSWVLRLGLLSAALGCGLA. A propeptide spanning residues 23–81 is cleaved from the precursor; it reads ERPRRVRRDPRAVRPPRPAAGPATCATRAARGRRASPPPPPGGAWEAVRVPRRRQQRAA. The segment at 28–93 is disordered; that stretch reads VRRDPRAVRP…AEEPSPPSRA (66 aa). A compositionally biased stretch (low complexity) spans 42–51; it reads AGPATCATRA. 17 disulfides stabilise this stretch: Cys141–Cys232, Cys324–Cys619, Cys329–Cys654, Cys411–Cys425, Cys421–Cys437, Cys454–Cys470, Cys471–Cys482, Cys580–Cys597, Cys584–Cys609, Cys707–Cys875, Cys710–Cys878, Cys750–Cys832, Cys772–Cys778, Cys944–Cys972, Cys957–Cys968, Cys980–Cys987, and Cys996–Cys1008. The segment at 272 to 583 is metalloprotease; sequence RGLHTPLPQL…ISEIQSCSDP (312 aa). N-linked (GlcNAc...) asparagine glycans are attached at residues Asn387 and Asn398. Residue Asn426 is glycosylated (N-linked (GlcNAc...) asparagine). Asn516 carries N-linked (GlcNAc...) asparagine glycosylation. His559 contacts Zn(2+). Glu560 is a catalytic residue. Residues His563 and His569 each contribute to the Zn(2+) site. N-linked (GlcNAc...) asparagine glycosylation is found at Asn598, Asn616, and Asn722. N-linked (GlcNAc...) asparagine glycosylation is present at Asn822. A glycan (N-linked (GlcNAc...) asparagine) is linked at Asn1023. 19 disulfide bridges follow: Cys1033/Cys1067, Cys1048/Cys1136, Cys1189/Cys1202, Cys1212/Cys1266, Cys1224/Cys1235, Cys1239/Cys1277, Cys1282/Cys1326, Cys1297/Cys1307, Cys1311/Cys1339, Cys1343/Cys1396, Cys1359/Cys1370, Cys1374/Cys1407, Cys1412/Cys1455, Cys1425/Cys1435, Cys1439/Cys1468, Cys1475/Cys1536, Cys1489/Cys1499, Cys1503/Cys1551, and Cys1555/Cys1573. Sushi domains follow at residues 1210 to 1279, 1280 to 1341, 1342 to 1409, 1410 to 1470, and 1473 to 1553; these read ADCP…ACEP, VDCG…LCEL, MCLA…TCVP, VTCD…VCRE, and GQCS…HCVK. N-linked (GlcNAc...) asparagine glycosylation is found at Asn1219 and Asn1223. The N-linked (GlcNAc...) asparagine glycan is linked to Asn1320. Asn1516 carries N-linked (GlcNAc...) asparagine glycosylation.

Belongs to the peptidase M43B family. In terms of assembly, homodimer; disulfide-linked. In pregnancy serum, predominantly found as a disulfide-linked 2:2 heterotetramer with the proform of PRG2. Zn(2+) serves as cofactor. In terms of tissue distribution, detected in kidney, spleen, brain, ovary, breast, skin, prostate, uterus, and placenta.

Its subcellular location is the secreted. It catalyses the reaction Cleavage of the 135-Met-|-Lys-136 bond in insulin-like growth factor binding protein (IGFBP)-4, and the 143-Ser-|-Lys-144 bond in IGFBP-5.. Its function is as follows. Metalloproteinase which specifically cleaves IGFBP-4 and IGFBP-5, resulting in release of bound IGF. Cleavage of IGFBP-4 is dramatically enhanced by the presence of IGF, whereas cleavage of IGFBP-5 is slightly inhibited by the presence of IGF. Isoform 2 cleaves IGFBP-4 very slowly compared to PAPP-A, but its ability to cleave IGFBP-5 is unaffected. This is Pappalysin-1 (Pappa) from Mus musculus (Mouse).